An 82-amino-acid chain; its full sequence is Sulfur carrier protein TusA (82 aa).

Cys17 (cysteine persulfide intermediate) is an active-site residue.

This sequence belongs to the sulfur carrier protein TusA family.

It is found in the cytoplasm. Functionally, sulfur carrier protein which probably makes part of a sulfur-relay system. The chain is Sulfur carrier protein TusA from Glaesserella parasuis serovar 5 (strain SH0165) (Haemophilus parasuis).